Consider the following 529-residue polypeptide: Apolipoprotein N-acyltransferase (529 aa).

5 helical membrane passes run 8-28 (VMLA…AVGA), 66-86 (ILPA…AGLW), 105-125 (LAIL…VAAA), 178-198 (LLGL…PALI), and 203-223 (GMGP…GYGF). Positions 242–491 (VQPAIDQSRK…VGILDATLSG (250 aa)) constitute a CN hydrolase domain. The active-site Proton acceptor is glutamate 286. The active site involves lysine 350. Cysteine 403 (nucleophile) is an active-site residue. A helical membrane pass occupies residues 505–525 (YFWLIFSILMIVAVFPALSFA).

It belongs to the CN hydrolase family. Apolipoprotein N-acyltransferase subfamily.

It is found in the cell inner membrane. The catalysed reaction is N-terminal S-1,2-diacyl-sn-glyceryl-L-cysteinyl-[lipoprotein] + a glycerophospholipid = N-acyl-S-1,2-diacyl-sn-glyceryl-L-cysteinyl-[lipoprotein] + a 2-acyl-sn-glycero-3-phospholipid + H(+). It functions in the pathway protein modification; lipoprotein biosynthesis (N-acyl transfer). Its function is as follows. Catalyzes the phospholipid dependent N-acylation of the N-terminal cysteine of apolipoprotein, the last step in lipoprotein maturation. This Agrobacterium fabrum (strain C58 / ATCC 33970) (Agrobacterium tumefaciens (strain C58)) protein is Apolipoprotein N-acyltransferase.